Here is a 360-residue protein sequence, read N- to C-terminus: uncharacterized protein (360 aa).

The ABC transporter domain occupies 4–235; the sequence is LSLQHIQKIY…PANMFVAGFI (232 aa). An ATP-binding site is contributed by 37-44; the sequence is GPSGCGKS.

The protein belongs to the ABC transporter superfamily.

This is an uncharacterized protein from Escherichia coli O6:K15:H31 (strain 536 / UPEC).